We begin with the raw amino-acid sequence, 61 residues long: Small ribosomal subunit protein uS14B (61 aa).

Positions 24, 27, 40, and 43 each coordinate Zn(2+).

The protein belongs to the universal ribosomal protein uS14 family. Zinc-binding uS14 subfamily. In terms of assembly, part of the 30S ribosomal subunit. Contacts proteins S3 and S10. Requires Zn(2+) as cofactor.

Functionally, binds 16S rRNA, required for the assembly of 30S particles and may also be responsible for determining the conformation of the 16S rRNA at the A site. The protein is Small ribosomal subunit protein uS14B of Myxococcus xanthus (strain DK1622).